A 312-amino-acid polypeptide reads, in one-letter code: Pyridoxal kinase (312 aa).

Met1 carries the post-translational modification N-acetylmethionine. Residues Ser12 and Thr47 each contribute to the pyridoxal site. Position 47 (Thr47) interacts with pyridoxal 5'-phosphate. Ser59 is modified (phosphoserine). Residue Asp113 participates in ATP binding. Asp113 contributes to the Na(+) binding site. Asp118 contributes to the Mg(2+) binding site. A Na(+)-binding site is contributed by Thr148. ATP contacts are provided by residues 150–153 and 186–187; these read NQFE and TS. Thr186 is a binding site for Na(+). Phosphoserine is present on Ser213. ATP-binding positions include 226-228 and Thr233; that span reads VDA. 234-235 contacts pyridoxal 5'-phosphate; the sequence is GD. Asp235 functions as the Proton acceptor in the catalytic mechanism. Phosphoserine is present on Ser285.

The protein belongs to the pyridoxine kinase family. Homodimer. The cofactor is Zn(2+). It depends on Mg(2+) as a cofactor.

Its subcellular location is the cytoplasm. The protein localises to the cytosol. It catalyses the reaction pyridoxal + ATP = pyridoxal 5'-phosphate + ADP + H(+). The enzyme catalyses pyridoxamine + ATP = pyridoxamine 5'-phosphate + ADP + H(+). The catalysed reaction is pyridoxine + ATP = pyridoxine 5'-phosphate + ADP + H(+). It participates in cofactor metabolism; pyridoxal 5'-phosphate salvage; pyridoxal 5'-phosphate from pyridoxal: step 1/1. Its pathway is cofactor metabolism; pyridoxal 5'-phosphate salvage; pyridoxine 5'-phosphate from pyridoxine: step 1/1. It functions in the pathway cofactor metabolism; pyridoxal 5'-phosphate salvage; pyridoxamine 5'-phosphate from pyridoxamine: step 1/1. Its activity is regulated as follows. Activity is increased in the presence of K(+)or Na(+). Catalyzes the phosphorylation of the dietary vitamin B6 vitamers pyridoxal (PL), pyridoxine (PN) and pyridoxamine (PM) to form pyridoxal 5'-phosphate (PLP), pyridoxine 5'-phosphate (PNP) and pyridoxamine 5'-phosphate (PMP), respectively. PLP is the active form of vitamin B6, and acts as a cofactor for over 140 different enzymatic reactions. This is Pyridoxal kinase (PDXK) from Bos taurus (Bovine).